A 268-amino-acid polypeptide reads, in one-letter code: Putative carbamate hydrolase RutD (268 aa).

One can recognise an AB hydrolase-1 domain in the interval 24–243 (VILSAGLGGS…NATLDIAPWG (220 aa)).

This sequence belongs to the AB hydrolase superfamily. Hydrolase RutD family.

It catalyses the reaction carbamate + 2 H(+) = NH4(+) + CO2. Its function is as follows. Involved in pyrimidine catabolism. May facilitate the hydrolysis of carbamate, a reaction that can also occur spontaneously. The chain is Putative carbamate hydrolase RutD from Caulobacter sp. (strain K31).